The following is a 433-amino-acid chain: MSISIETLEGLQRRVTITVAADKIEAAYKEQLKGYAKNARVDGFRKGKVPHAIIEQRFGLAARQDVLSDEMQRAFFDAVIAEKINLAGRPTFTPNNYQPGQEFSFTATFEVFPEVELKGLENIEVEKPVVEITEADLDKMIDVLRKQQATWAESQAAAQAEDRVVIDFVGSVDGEEFEGGKATDFTLAMGQDRMIPGFEEGIVGHKAGEQFDIDVTFPEEYHAENLKGKAAKFAITLKKVENIVLPELTEEFVKKFGSAKTVEDLRAEIKKNMQRELKNAVTARVKNQVINGLIAQNEIEVPAAAVAEEVDVLRRQAVQRFGGKPEMAAQLPAELFEADAKRRVQVGLLLSTVIGTNELKVDEKRVEETIAEIASAYEQPAEVVAHYAKNRQLTENIRNVVLEEQAVEVVLAKAKVTEKATSFDEVMAQQAQG.

The region spanning 161-246 is the PPIase FKBP-type domain; sequence EDRVVIDFVG…LKKVENIVLP (86 aa).

Belongs to the FKBP-type PPIase family. Tig subfamily.

It is found in the cytoplasm. The catalysed reaction is [protein]-peptidylproline (omega=180) = [protein]-peptidylproline (omega=0). In terms of biological role, involved in protein export. Acts as a chaperone by maintaining the newly synthesized protein in an open conformation. Functions as a peptidyl-prolyl cis-trans isomerase. The protein is Trigger factor of Actinobacillus pleuropneumoniae serotype 5b (strain L20).